The primary structure comprises 205 residues: Small ribosomal subunit protein uS4 (205 aa).

Positions 19–45 (IWGRPKSPVNRREYGPGQHGQRRKGKL) are disordered. The S4 RNA-binding domain maps to 94 to 157 (SRLDAVVYRA…KQLAIVLEAV (64 aa)).

Belongs to the universal ribosomal protein uS4 family. In terms of assembly, part of the 30S ribosomal subunit. Contacts protein S5. The interaction surface between S4 and S5 is involved in control of translational fidelity.

Its function is as follows. One of the primary rRNA binding proteins, it binds directly to 16S rRNA where it nucleates assembly of the body of the 30S subunit. In terms of biological role, with S5 and S12 plays an important role in translational accuracy. The polypeptide is Small ribosomal subunit protein uS4 (Brucella suis biovar 1 (strain 1330)).